We begin with the raw amino-acid sequence, 293 residues long: Probable xyloglucan endotransglucosylase/hydrolase protein 5 (293 aa).

The signal sequence occupies residues 1–21; the sequence is MGRLSSTLCLTFLILATVAFG. Residues 23–220 enclose the GH16 domain; that stretch reads PPKKSINVPF…WEKAPFVASY (198 aa). E106 (nucleophile) is an active-site residue. E110 serves as the catalytic Proton donor. A xyloglucan-binding site is contributed by E110. Residue N114 is glycosylated (N-linked (GlcNAc...) asparagine). Xyloglucan contacts are provided by residues 123 to 125, 133 to 135, 199 to 200, and G204; these read QTN, NRE, and DW. Intrachain disulfides connect C228–C237 and C274–C287. R279 lines the xyloglucan pocket.

The protein belongs to the glycosyl hydrolase 16 family. XTH group 1 subfamily. In terms of processing, contains at least one intrachain disulfide bond essential for its enzymatic activity. In terms of tissue distribution, root specific.

It localises to the secreted. The protein resides in the cell wall. The protein localises to the extracellular space. Its subcellular location is the apoplast. The enzyme catalyses breaks a beta-(1-&gt;4) bond in the backbone of a xyloglucan and transfers the xyloglucanyl segment on to O-4 of the non-reducing terminal glucose residue of an acceptor, which can be a xyloglucan or an oligosaccharide of xyloglucan.. Catalyzes xyloglucan endohydrolysis (XEH) and/or endotransglycosylation (XET). Cleaves and religates xyloglucan polymers, an essential constituent of the primary cell wall, and thereby participates in cell wall construction of growing tissues. In Arabidopsis thaliana (Mouse-ear cress), this protein is Probable xyloglucan endotransglucosylase/hydrolase protein 5 (XTH5).